The sequence spans 164 residues: Ribosome maturation factor RimP (164 aa).

It belongs to the RimP family.

It is found in the cytoplasm. Required for maturation of 30S ribosomal subunits. The protein is Ribosome maturation factor RimP of Mycoplasma mycoides subsp. mycoides SC (strain CCUG 32753 / NCTC 10114 / PG1).